The chain runs to 153 residues: Prefoldin subunit alpha (153 aa).

The interval 126 to 153 (KRLEQGYRQAPGGSPVPHRHDHEDHDEE) is disordered. Residues 143-153 (HRHDHEDHDEE) are compositionally biased toward basic and acidic residues.

The protein belongs to the prefoldin alpha subunit family. Heterohexamer of two alpha and four beta subunits.

The protein localises to the cytoplasm. Its function is as follows. Molecular chaperone capable of stabilizing a range of proteins. Seems to fulfill an ATP-independent, HSP70-like function in archaeal de novo protein folding. This is Prefoldin subunit alpha from Methanoregula boonei (strain DSM 21154 / JCM 14090 / 6A8).